We begin with the raw amino-acid sequence, 581 residues long: Intermediate filament protein ifa-3 (581 aa).

Positions 1–33 (MADPDSYRSSITSRPAFNRTVTSSTQNYGTPAS) are disordered. The interval 1 to 74 (MADPDSYRSS…RDDREREKKE (74 aa)) is head. Residues 7-33 (YRSSITSRPAFNRTVTSSTQNYGTPAS) show a composition bias toward polar residues. An IF rod domain is found at 71 to 424 (EKKEITELND…RMLEGNSEEN (354 aa)). Positions 75–106 (ITELNDRLASYIGKVRFLAAQNRKLEADLNVL) are coil 1A. The linker 1 stretch occupies residues 107–120 (QSRFGKSTGSVKIM). The coil 1B stretch occupies residues 121 to 258 (YEMEITTATN…RGFETELKDL (138 aa)). The interval 259 to 276 (QAQAARDTTSENREYFKN) is linker 12. The tract at residues 277 to 424 (ELMNSIRDIR…RMLEGNSEEN (148 aa)) is coil 2. The tail stretch occupies residues 425 to 578 (GLRQLVEKVV…THMQRQSQQT (154 aa)). The region spanning 457–574 (SRTSYQRSAK…EERATHMQRQ (118 aa)) is the LTD domain.

This sequence belongs to the intermediate filament family. Forms some heteromeric filaments with ifb-1. Expressed in the embryonic and larval hypodermis. Also expressed in the ventral nerve cord of larvae.

The protein localises to the cytoplasm. Functionally, cytoplasmic intermediate filaments provide mechanical strength to cells. Essential protein, involved in attachment structures in epidermal cells that connect muscles to the external cuticle. Required for epidermal morphogenesis in embryos. Probable component of embryonic epidermal attachment structures. In Caenorhabditis elegans, this protein is Intermediate filament protein ifa-3 (ifa-3).